The primary structure comprises 236 residues: Phosphoribosylaminoimidazole-succinocarboxamide synthase (236 aa).

It belongs to the SAICAR synthetase family.

It catalyses the reaction 5-amino-1-(5-phospho-D-ribosyl)imidazole-4-carboxylate + L-aspartate + ATP = (2S)-2-[5-amino-1-(5-phospho-beta-D-ribosyl)imidazole-4-carboxamido]succinate + ADP + phosphate + 2 H(+). It participates in purine metabolism; IMP biosynthesis via de novo pathway; 5-amino-1-(5-phospho-D-ribosyl)imidazole-4-carboxamide from 5-amino-1-(5-phospho-D-ribosyl)imidazole-4-carboxylate: step 1/2. The polypeptide is Phosphoribosylaminoimidazole-succinocarboxamide synthase (purC) (Rickettsia prowazekii (strain Madrid E)).